The following is a 604-amino-acid chain: Glutamine--fructose-6-phosphate aminotransferase [isomerizing] (604 aa).

Cys-2 serves as the catalytic Nucleophile; for GATase activity. The Glutamine amidotransferase type-2 domain maps to Cys-2–Gln-219. SIS domains follow at residues Leu-279–Ala-427 and Leu-454–Pro-594. Residue Lys-599 is the For Fru-6P isomerization activity of the active site.

In terms of assembly, homodimer.

Its subcellular location is the cytoplasm. The enzyme catalyses D-fructose 6-phosphate + L-glutamine = D-glucosamine 6-phosphate + L-glutamate. Catalyzes the first step in hexosamine metabolism, converting fructose-6P into glucosamine-6P using glutamine as a nitrogen source. The chain is Glutamine--fructose-6-phosphate aminotransferase [isomerizing] from Legionella pneumophila subsp. pneumophila (strain Philadelphia 1 / ATCC 33152 / DSM 7513).